A 185-amino-acid chain; its full sequence is Ribosome-recycling factor (185 aa).

Basic and acidic residues predominate over residues 138 to 179 (TLKRQEKNGDITEDEQRSLEKQVQKVTDDATKEIDKLADQKS). The tract at residues 138-185 (TLKRQEKNGDITEDEQRSLEKQVQKVTDDATKEIDKLADQKSQEITQG) is disordered.

The protein belongs to the RRF family.

It is found in the cytoplasm. Functionally, responsible for the release of ribosomes from messenger RNA at the termination of protein biosynthesis. May increase the efficiency of translation by recycling ribosomes from one round of translation to another. This chain is Ribosome-recycling factor, found in Lactobacillus gasseri (strain ATCC 33323 / DSM 20243 / BCRC 14619 / CIP 102991 / JCM 1131 / KCTC 3163 / NCIMB 11718 / NCTC 13722 / AM63).